Reading from the N-terminus, the 85-residue chain is RNA-binding protein Hfq (85 aa).

Positions 9-69 (DQLLNTARKD…ISTIIPAKII (61 aa)) constitute a Sm domain.

It belongs to the Hfq family. As to quaternary structure, homohexamer.

Functionally, RNA chaperone that binds small regulatory RNA (sRNAs) and mRNAs to facilitate mRNA translational regulation in response to envelope stress, environmental stress and changes in metabolite concentrations. Also binds with high specificity to tRNAs. This is RNA-binding protein Hfq from Leptospira interrogans serogroup Icterohaemorrhagiae serovar copenhageni (strain Fiocruz L1-130).